Here is a 173-residue protein sequence, read N- to C-terminus: uncharacterized protein (173 aa).

This is an uncharacterized protein from Acanthamoeba polyphaga (Amoeba).